The chain runs to 207 residues: Guanylate kinase (207 aa).

One can recognise a Guanylate kinase-like domain in the interval 6-185; that stretch reads GLLIVLSGPS…AKNRIQCIVE (180 aa). 13-20 lines the ATP pocket; sequence GPSGVGKG.

This sequence belongs to the guanylate kinase family.

It is found in the cytoplasm. The enzyme catalyses GMP + ATP = GDP + ADP. Its function is as follows. Essential for recycling GMP and indirectly, cGMP. The protein is Guanylate kinase of Staphylococcus aureus (strain Mu50 / ATCC 700699).